The sequence spans 400 residues: Phosphoglycerate kinase (400 aa).

Residues 21 to 23, R37, 60 to 63, R119, and R152 contribute to the substrate site; these read DFN and HFGR. ATP is bound by residues K205, G296, E327, and 353 to 356; that span reads GGDT.

Belongs to the phosphoglycerate kinase family. As to quaternary structure, monomer.

It is found in the cytoplasm. It carries out the reaction (2R)-3-phosphoglycerate + ATP = (2R)-3-phospho-glyceroyl phosphate + ADP. It participates in carbohydrate degradation; glycolysis; pyruvate from D-glyceraldehyde 3-phosphate: step 2/5. The chain is Phosphoglycerate kinase from Aliarcobacter butzleri (strain RM4018) (Arcobacter butzleri).